Here is a 715-residue protein sequence, read N- to C-terminus: Palmitoyltransferase ZDHHC5 (715 aa).

Residues 1 to 13 are Cytoplasmic-facing; sequence MPAESGKRFKPSK. The helical transmembrane segment at 14 to 34 threads the bilayer; that stretch reads YVPVSAAAIFLVGATTLFFAF. The Extracellular segment spans residues 35–38; the sequence is TCPG. The helical transmembrane segment at 39-59 threads the bilayer; it reads LSLYVSPAVPIYNAIMFLFVL. Residues 60–148 are Cytoplasmic-facing; sequence ANFSMATFMD…NCIGRRNYRY (89 aa). Phosphotyrosine is present on Tyr91. The DHHC domain occupies 104 to 154; it reads KWCATCRFYRPPRCSHCSVCDNCVEEFDHHCPWVNNCIGRRNYRYFFLFLL. Cys134 serves as the catalytic S-palmitoyl cysteine intermediate. The chain crosses the membrane as a helical span at residues 149-169; that stretch reads FFLFLLSLTAHIMGVFGFGLL. Residues 170 to 191 are Extracellular-facing; it reads YVLYHIEELSGVRTAVTMAVMC. Residues 192-212 traverse the membrane as a helical segment; it reads VAGLFFIPVAGLTGFHVVLVA. At 213–715 the chain is on the cytoplasmic side; that stretch reads RGRTTNEQVT…VGGTTYEISV (503 aa). Ser247 bears the Phosphoserine mark. The tract at residues 289–715 is disordered; the sequence is GELRRTKSKG…VGGTTYEISV (427 aa). At Thr294 the chain carries Phosphothreonine. Ser296 and Ser299 each carry phosphoserine. At Thr303 the chain carries Phosphothreonine. Phosphoserine is present on Ser345. Phosphothreonine is present on residues Thr348 and Thr350. Over residues 359–373 the composition is skewed to low complexity; sequence SSSSTSAAMPHSSSA. 4 positions are modified to phosphoserine: Ser380, Ser398, Ser406, and Ser409. Thr411 carries the phosphothreonine modification. Ser415, Ser425, Ser429, and Ser432 each carry phosphoserine. Positions 422-432 are enriched in low complexity; the sequence is SSGSRSSSLKS. Residue Thr436 is modified to Phosphothreonine. Residues 442–478 are compositionally biased toward polar residues; sequence QLQSIRSEGTTSTSYKSLANQTRNGSLSYDSLLTPSD. 2 positions are modified to phosphoserine: Ser529 and Ser554. Arg617 is modified (omega-N-methylarginine). Phosphoserine is present on Ser621. At Thr659 the chain carries Phosphothreonine. The segment covering 666–677 has biased composition (polar residues); sequence LKTTYSKSNGQP. Phosphoserine occurs at positions 684 and 694. Arg697 is modified (omega-N-methylarginine).

This sequence belongs to the DHHC palmitoyltransferase family. ERF2/ZDHHC9 subfamily.

Its subcellular location is the cell membrane. It carries out the reaction L-cysteinyl-[protein] + hexadecanoyl-CoA = S-hexadecanoyl-L-cysteinyl-[protein] + CoA. Its function is as follows. Palmitoyltransferase that catalyzes the addition of palmitate onto various protein substrates such as CTNND2, CD36, GSDMD, NLRP3, NOD1, NOD2, STAT3 and S1PR1 thus plays a role in various biological processes including cell adhesion, inflammation, fatty acid uptake, bacterial sensing or cardiac functions. Plays an important role in the regulation of synapse efficacy by mediating palmitoylation of delta-catenin/CTNND2, thereby increasing synaptic delivery and surface stabilization of alpha-amino-3-hydroxy-5-methyl-4-isoxazole propionic acid receptors (AMPARs). Under basal conditions, remains at the synaptic membrane through FYN-mediated phosphorylation that prevents association with endocytic proteins. Neuronal activity enhances the internalization and trafficking of DHHC5 from spines to dendritic shafts where it palmitoylates delta-catenin/CTNND2. Regulates cell adhesion at the plasma membrane by palmitoylating GOLGA7B and DSG2. Plays a role in innate immune response by mediating the palmitoylation of NOD1 and NOD2 and their proper recruitment to the bacterial entry site and phagosomes. Also participates in fatty acid uptake by palmitoylating CD36 and thereby targeting it to the plasma membrane. Upon binding of fatty acids to CD36, gets phosphorylated by LYN leading to inactivation and subsequent CD36 caveolar endocytosis. Controls oligodendrocyte development by catalyzing STAT3 palmitoylation. Acts as a regulator of inflammatory response by mediating palmitoylation of NLRP3 and GSDMD. Palmitoylates NLRP3 to promote inflammasome assembly and activation. Activates pyroptosis by catalyzing palmitoylation of gasdermin-D (GSDMD), thereby promoting membrane translocation and pore formation of GSDMD. The chain is Palmitoyltransferase ZDHHC5 (ZDHHC5) from Pan troglodytes (Chimpanzee).